We begin with the raw amino-acid sequence, 468 residues long: ATP synthase subunit beta (468 aa).

148 to 155 (GGAGVGKT) is a binding site for ATP.

It belongs to the ATPase alpha/beta chains family. As to quaternary structure, F-type ATPases have 2 components, CF(1) - the catalytic core - and CF(0) - the membrane proton channel. CF(1) has five subunits: alpha(3), beta(3), gamma(1), delta(1), epsilon(1). CF(0) has three main subunits: a(1), b(2) and c(9-12). The alpha and beta chains form an alternating ring which encloses part of the gamma chain. CF(1) is attached to CF(0) by a central stalk formed by the gamma and epsilon chains, while a peripheral stalk is formed by the delta and b chains.

Its subcellular location is the cell inner membrane. It carries out the reaction ATP + H2O + 4 H(+)(in) = ADP + phosphate + 5 H(+)(out). In terms of biological role, produces ATP from ADP in the presence of a proton gradient across the membrane. The catalytic sites are hosted primarily by the beta subunits. The polypeptide is ATP synthase subunit beta (Stenotrophomonas maltophilia (strain R551-3)).